Consider the following 214-residue polypeptide: MRPDRPRDPVTGPDEGPESPYPIRMSGPVIKGFGRGSKELGIPTANIPADELSQHPELSVGVYYGVVALDPARFSTGETVLPAVLSIGYNPFYKNESKSIEIHIMPPLSAPSPTATTSTDGQVTFHKLPDFYGTPLNLLILGYIRPEYDYISSEALIEDIRVDCEVARRSLQRPAYRCYLDARAVEDPACGGDDCGIVVDAIDGGAMRGMRFCI.

Positions 1–27 (MRPDRPRDPVTGPDEGPESPYPIRMSG) are disordered. Mg(2+)-binding residues include Thr44 and Asn46. The active-site Nucleophile is Glu101.

The protein belongs to the flavokinase family. Zn(2+) serves as cofactor. Requires Mg(2+) as cofactor.

The catalysed reaction is riboflavin + ATP = FMN + ADP + H(+). Its pathway is cofactor biosynthesis; FMN biosynthesis; FMN from riboflavin (ATP route): step 1/1. Catalyzes the phosphorylation of riboflavin (vitamin B2) to form flavin mononucleotide (FMN) coenzyme. The sequence is that of Riboflavin kinase (fmn1) from Aspergillus niger (strain ATCC MYA-4892 / CBS 513.88 / FGSC A1513).